The sequence spans 159 residues: 2-C-methyl-D-erythritol 2,4-cyclodiphosphate synthase (159 aa).

A divalent metal cation is bound by residues Asp-10 and His-12. Residues 10 to 12 and 36 to 37 contribute to the 4-CDP-2-C-methyl-D-erythritol 2-phosphate site; these read DVH and HS. An a divalent metal cation-binding site is contributed by His-44. 4-CDP-2-C-methyl-D-erythritol 2-phosphate-binding positions include 58-60, 134-137, Phe-141, and Arg-144; these read DIG and TTSE.

This sequence belongs to the IspF family. In terms of assembly, homotrimer. The cofactor is a divalent metal cation.

The enzyme catalyses 4-CDP-2-C-methyl-D-erythritol 2-phosphate = 2-C-methyl-D-erythritol 2,4-cyclic diphosphate + CMP. It functions in the pathway isoprenoid biosynthesis; isopentenyl diphosphate biosynthesis via DXP pathway; isopentenyl diphosphate from 1-deoxy-D-xylulose 5-phosphate: step 4/6. Involved in the biosynthesis of isopentenyl diphosphate (IPP) and dimethylallyl diphosphate (DMAPP), two major building blocks of isoprenoid compounds. Catalyzes the conversion of 4-diphosphocytidyl-2-C-methyl-D-erythritol 2-phosphate (CDP-ME2P) to 2-C-methyl-D-erythritol 2,4-cyclodiphosphate (ME-CPP) with a corresponding release of cytidine 5-monophosphate (CMP). In Cereibacter sphaeroides (strain ATCC 17029 / ATH 2.4.9) (Rhodobacter sphaeroides), this protein is 2-C-methyl-D-erythritol 2,4-cyclodiphosphate synthase.